Reading from the N-terminus, the 155-residue chain is Sperm microtubule associated protein 1 (155 aa).

The polypeptide is Sperm microtubule associated protein 1 (Spmap1) (Mus musculus (Mouse)).